Reading from the N-terminus, the 75-residue chain is Putative snRNP Sm-like protein (75 aa).

Residues 4–75 (RPLDVIHRSL…NVLAISPTEE (72 aa)) enclose the Sm domain.

The protein belongs to the snRNP Sm proteins family.

The sequence is that of Putative snRNP Sm-like protein from Pyrococcus horikoshii (strain ATCC 700860 / DSM 12428 / JCM 9974 / NBRC 100139 / OT-3).